The primary structure comprises 151 residues: Glutamate mutase sigma subunit 1 (151 aa).

The region spanning P7–T140 is the B12-binding domain. Residues S17–V21, H20, S65–L67, and N96–G100 each bind adenosylcob(III)alamin.

The protein belongs to the methylaspartate mutase GlmS subunit family. Heterotetramer composed of 2 epsilon subunits (GlmE) and 2 sigma subunits (GlmS). GlmE exists as a homodimer and GlmS as a monomer. Requires adenosylcob(III)alamin as cofactor.

The catalysed reaction is (2S,3S)-3-methyl-L-aspartate = L-glutamate. It functions in the pathway amino-acid degradation; L-glutamate degradation via mesaconate pathway; acetate and pyruvate from L-glutamate: step 1/4. Functionally, catalyzes the carbon skeleton rearrangement of L-glutamate to L-threo-3-methylaspartate ((2S,3S)-3-methylaspartate). This is Glutamate mutase sigma subunit 1 from Haloarcula marismortui (strain ATCC 43049 / DSM 3752 / JCM 8966 / VKM B-1809) (Halobacterium marismortui).